A 364-amino-acid chain; its full sequence is GDSL esterase/lipase 7 (364 aa).

The signal sequence occupies residues 1-19; that stretch reads MKSLLICLVLLELVWLGNG. S37 serves as the catalytic Nucleophile. Residues N236, N237, and N264 are each glycosylated (N-linked (GlcNAc...) asparagine). Catalysis depends on residues D329 and H332. N-linked (GlcNAc...) asparagine glycosylation occurs at N351.

It belongs to the 'GDSL' lipolytic enzyme family.

Its subcellular location is the secreted. In Arabidopsis thaliana (Mouse-ear cress), this protein is GDSL esterase/lipase 7 (GLIP7).